Reading from the N-terminus, the 423-residue chain is Serine--tRNA ligase 2 (423 aa).

Residue 231-233 participates in L-serine binding; sequence TAE. Residue 262 to 264 coordinates ATP; that stretch reads RSE. L-serine is bound at residue Glu-285. ATP is bound at residue 349 to 352; sequence EISS. L-serine is bound at residue Ser-384.

It belongs to the class-II aminoacyl-tRNA synthetase family. Type-1 seryl-tRNA synthetase subfamily. As to quaternary structure, homodimer. The tRNA molecule binds across the dimer.

The protein localises to the cytoplasm. It carries out the reaction tRNA(Ser) + L-serine + ATP = L-seryl-tRNA(Ser) + AMP + diphosphate + H(+). The enzyme catalyses tRNA(Sec) + L-serine + ATP = L-seryl-tRNA(Sec) + AMP + diphosphate + H(+). It participates in aminoacyl-tRNA biosynthesis; selenocysteinyl-tRNA(Sec) biosynthesis; L-seryl-tRNA(Sec) from L-serine and tRNA(Sec): step 1/1. Functionally, catalyzes the attachment of serine to tRNA(Ser). Is also able to aminoacylate tRNA(Sec) with serine, to form the misacylated tRNA L-seryl-tRNA(Sec), which will be further converted into selenocysteinyl-tRNA(Sec). The chain is Serine--tRNA ligase 2 from Enterococcus faecalis (strain ATCC 700802 / V583).